The sequence spans 492 residues: Transmembrane protein 39B (492 aa).

Positions 1-54 (MGGRRGPNRTSYCRNPLCEPGSSGGSSGSHTSSASVTSVRSRTRSSSGTGLSSP) are disordered. A glycan (N-linked (GlcNAc...) asparagine) is linked at Asn-8. The span at 28 to 53 (GSHTSSASVTSVRSRTRSSSGTGLSS) shows a compositional bias: low complexity. 8 consecutive transmembrane segments (helical) span residues 77 to 97 (SILF…VHYI), 115 to 135 (TSLN…IVLG), 153 to 175 (SLFR…GWSL), 185 to 205 (TYSF…IPFL), 288 to 308 (EVLV…VWFV), 322 to 342 (LFLL…LPAS), 421 to 441 (ILNI…YSLM), and 447 to 467 (HQTI…FKLL).

Belongs to the TMEM39 family.

The protein resides in the endoplasmic reticulum membrane. May protect the cells against DNA damage caused by exposure to the cold-warming stress and facilitates tissue damage repair during the recovery phase. This Homo sapiens (Human) protein is Transmembrane protein 39B.